The chain runs to 34 residues: Brevinin-2Rf (34 aa).

Cysteines 28 and 34 form a disulfide.

In terms of tissue distribution, expressed by the skin glands.

It localises to the secreted. Functionally, antimicrobial peptide. The protein is Brevinin-2Rf of Pelophylax ridibundus (Marsh frog).